A 350-amino-acid polypeptide reads, in one-letter code: S-adenosylmethionine:tRNA ribosyltransferase-isomerase (350 aa).

Belongs to the QueA family. As to quaternary structure, monomer.

It is found in the cytoplasm. The enzyme catalyses 7-aminomethyl-7-carbaguanosine(34) in tRNA + S-adenosyl-L-methionine = epoxyqueuosine(34) in tRNA + adenine + L-methionine + 2 H(+). Its pathway is tRNA modification; tRNA-queuosine biosynthesis. In terms of biological role, transfers and isomerizes the ribose moiety from AdoMet to the 7-aminomethyl group of 7-deazaguanine (preQ1-tRNA) to give epoxyqueuosine (oQ-tRNA). The protein is S-adenosylmethionine:tRNA ribosyltransferase-isomerase of Vibrio parahaemolyticus serotype O3:K6 (strain RIMD 2210633).